Reading from the N-terminus, the 459-residue chain is V-type ATP synthase beta chain (459 aa).

The protein belongs to the ATPase alpha/beta chains family.

Produces ATP from ADP in the presence of a proton gradient across the membrane. The V-type beta chain is a regulatory subunit. The protein is V-type ATP synthase beta chain of Thermoanaerobacter pseudethanolicus (strain ATCC 33223 / 39E) (Clostridium thermohydrosulfuricum).